The sequence spans 263 residues: 4-hydroxy-2-oxo-heptane-1,7-dioate aldolase (263 aa).

Residue histidine 45 is the Proton acceptor of the active site. A substrate-binding site is contributed by glutamine 147. Glutamate 149 provides a ligand contact to a divalent metal cation. Residues alanine 174 and aspartate 175 each coordinate substrate. Aspartate 175 contributes to the a divalent metal cation binding site.

Belongs to the HpcH/HpaI aldolase family. Homohexamer; trimer of dimers. A divalent metal cation serves as cofactor.

It carries out the reaction 4-hydroxy-2-oxoheptanedioate = succinate semialdehyde + pyruvate. Its pathway is aromatic compound metabolism; 4-hydroxyphenylacetate degradation; pyruvate and succinate semialdehyde from 4-hydroxyphenylacetate: step 7/7. Its function is as follows. Catalyzes the reversible retro-aldol cleavage of 4-hydroxy-2-ketoheptane-1,7-dioate (HKHD) to pyruvate and succinic semialdehyde. This chain is 4-hydroxy-2-oxo-heptane-1,7-dioate aldolase, found in Salmonella enteritidis PT4 (strain P125109).